Here is a 317-residue protein sequence, read N- to C-terminus: Ret finger protein-like 1 (317 aa).

The RING-type zinc finger occupies 40 to 82; sequence CPVCSDYLEKPMSLECGCAVCFKCINSLQKEPHGEDLLCCCCS. The 195-residue stretch at 107–301 folds into the B30.2/SPRY domain; it reads EPKLKKILQM…DKSVLSICPV (195 aa).

In terms of processing, phosphorylated by PKC and CDK1. The antiproliferative effect seems to be positively regulated by PKC phosphorylation and negatively by CDK1 phosphorylation. As to expression, seems to be expressed in prostate and less abundantly in adult brain, fetal liver, and fetal kidney.

Its subcellular location is the cytoplasm. It is found in the nucleus. Negatively regulates the G2-M phase transition, possibly by promoting cyclin B1/CCNB1 and CDK1 proteasomal degradation and thereby preventing their accumulation during interphase. The chain is Ret finger protein-like 1 (RFPL1) from Homo sapiens (Human).